A 592-amino-acid polypeptide reads, in one-letter code: Arginine--tRNA ligase (592 aa).

The 'HIGH' region signature appears at 131-141 (ANPTGPMHVGH).

Belongs to the class-I aminoacyl-tRNA synthetase family. In terms of assembly, monomer.

The protein localises to the cytoplasm. The enzyme catalyses tRNA(Arg) + L-arginine + ATP = L-arginyl-tRNA(Arg) + AMP + diphosphate. The protein is Arginine--tRNA ligase of Rhodospirillum rubrum (strain ATCC 11170 / ATH 1.1.1 / DSM 467 / LMG 4362 / NCIMB 8255 / S1).